A 379-amino-acid polypeptide reads, in one-letter code: DNA-directed RNA polymerase subunit Rpo1C (379 aa).

This sequence belongs to the RNA polymerase beta' chain family. Part of the RNA polymerase complex.

It localises to the cytoplasm. It carries out the reaction RNA(n) + a ribonucleoside 5'-triphosphate = RNA(n+1) + diphosphate. In terms of biological role, DNA-dependent RNA polymerase (RNAP) catalyzes the transcription of DNA into RNA using the four ribonucleoside triphosphates as substrates. Forms part of the jaw domain. The chain is DNA-directed RNA polymerase subunit Rpo1C from Pyrobaculum aerophilum (strain ATCC 51768 / DSM 7523 / JCM 9630 / CIP 104966 / NBRC 100827 / IM2).